Here is a 478-residue protein sequence, read N- to C-terminus: Vitronectin (478 aa).

The N-terminal stretch at 1–19 (MAPLRPLLILALLAWVALA) is a signal peptide. One can recognise an SMB domain in the interval 20–63 (DQESCKGRCTEGFNVDKKCQCDELCSYYQSCCTDYTAECKPQVT). 7 disulfides stabilise this stretch: Cys24-Cys28, Cys24-Cys40, Cys28-Cys58, Cys38-Cys40, Cys38-Cys51, Cys44-Cys50, and Cys51-Cys58. The short motif at 64–66 (RGD) is the Cell attachment site element. Thr69 bears the Phosphothreonine; by CK2; in vitro mark. Tyr75 carries the post-translational modification Sulfotyrosine. At Thr76 the chain carries Phosphothreonine; by CK2; in vitro. Residue Tyr78 is modified to Sulfotyrosine. N-linked (GlcNAc...) (complex) asparagine glycosylation occurs at Asn86. Residues 91-158 (EQVGGPSLTS…PPAEEELCSG (68 aa)) form a disordered region. Residues 97 to 112 (SLTSDLQAQSKGNPEQ) are compositionally biased toward polar residues. A phosphoserine mark is found at Ser130 and Ser137. Basic and acidic residues predominate over residues 133 to 143 (EGIDSRPETLH). 3 Hemopexin repeats span residues 158–202 (GKPF…VWGI), 203–250 (EGPI…FDGI), and 251–305 (PDNV…FEHF). The N-linked (GlcNAc...) asparagine glycan is linked to Asn169. Asn242 is a glycosylation site (N-linked (GlcNAc...) (complex) asparagine). Tyr282 carries the sulfotyrosine modification. Cys293 and Cys430 are oxidised to a cystine. Residue Ser312 is modified to Phosphoserine. A heparin-binding region spans residues 362-395 (RPSLAKKQRFRHRNRKGYRSQRGHSRGRNQNSRR). Positions 364–398 (SLAKKQRFRHRNRKGYRSQRGHSRGRNQNSRRPSR) are disordered. The segment covering 365–388 (LAKKQRFRHRNRKGYRSQRGHSRG) has biased composition (basic residues). Ser397 bears the Phosphoserine; by PKA mark. Sulfotyrosine is present on residues Tyr417 and Tyr420. A Hemopexin 4 repeat occupies 419-472 (DYRMDWLVPATCEPIQSVFFFSGDKYYRVNLRTRRVDTVDPPYPRSIAQYWLGC).

Exists in two forms: a single chain 75 kDa form (V75) and a clipped form composed of two chains (65 kDa and 10 kDa) (V65+V10) which are held together by a disulfide bond. Interacts with SERPINE1/PAI1, insulin and C1QBP. As to quaternary structure, (Microbial infection) Interacts (via hemopexin repeat 2) with P.falciparum (isolate CDC / Honduras) SERA5 P47 (via C-terminus); may form heterotetramers of two VTN and SERA5 P47 heterodimers; the interaction may protect merozoites from phagocytosis by host monocytes; VTN glycosylation appears to be dispensable for the interaction. In terms of processing, sulfated on tyrosine residues. N- and O-glycosylated. Post-translationally, phosphorylation on Thr-69 and Thr-76 favors cell adhesion and spreading. In terms of processing, it has been suggested that the active SMB domain may be permitted considerable disulfide bond heterogeneity or variability, thus two alternate disulfide patterns based on 3D structures are described with 1 disulfide bond conserved in both. Phosphorylation sites are present in the extracellular medium. In terms of tissue distribution, expressed in the retina pigment epithelium (at protein level). Expressed in plasma (at protein level). Expressed in serum (at protein level).

It is found in the secreted. Its subcellular location is the extracellular space. It localises to the parasitophorous vacuole. Functionally, vitronectin is a cell adhesion and spreading factor found in serum and tissues. Vitronectin interact with glycosaminoglycans and proteoglycans. Is recognized by certain members of the integrin family and serves as a cell-to-substrate adhesion molecule. Inhibitor of the membrane-damaging effect of the terminal cytolytic complement pathway. Its function is as follows. Somatomedin-B is a growth hormone-dependent serum factor with protease-inhibiting activity. The protein is Vitronectin (VTN) of Homo sapiens (Human).